Here is a 1027-residue protein sequence, read N- to C-terminus: Protein translocase subunit SecA (1027 aa).

Residues Gln143, 161–165, and Asp661 contribute to the ATP site; that span reads GEGKT. A disordered region spans residues 981–1027; sequence EESGTSNADNAGDNGPQTVIAEKKPGRNDLCPCGSGKKYKNCHGQQP. Residues Cys1011, Cys1013, Cys1022, and His1023 each contribute to the Zn(2+) site.

The protein belongs to the SecA family. In terms of assembly, monomer and homodimer. Part of the essential Sec protein translocation apparatus which comprises SecA, SecYEG and auxiliary proteins SecDF. Other proteins may also be involved. Zn(2+) is required as a cofactor.

It localises to the cell inner membrane. Its subcellular location is the cytoplasm. It carries out the reaction ATP + H2O + cellular proteinSide 1 = ADP + phosphate + cellular proteinSide 2.. In terms of biological role, part of the Sec protein translocase complex. Interacts with the SecYEG preprotein conducting channel. Has a central role in coupling the hydrolysis of ATP to the transfer of proteins into and across the cell membrane, serving as an ATP-driven molecular motor driving the stepwise translocation of polypeptide chains across the membrane. This chain is Protein translocase subunit SecA, found in Chlorobium limicola (strain DSM 245 / NBRC 103803 / 6330).